The following is a 264-amino-acid chain: Methylthioribulose-1-phosphate dehydratase (264 aa).

Cysteine 110 is a binding site for substrate. Zn(2+) contacts are provided by histidine 128 and histidine 130. The Proton donor/acceptor role is filled by glutamate 151. Zn(2+) is bound at residue histidine 213.

It belongs to the aldolase class II family. MtnB subfamily. Zn(2+) is required as a cofactor.

Its subcellular location is the cytoplasm. It catalyses the reaction 5-(methylsulfanyl)-D-ribulose 1-phosphate = 5-methylsulfanyl-2,3-dioxopentyl phosphate + H2O. It participates in amino-acid biosynthesis; L-methionine biosynthesis via salvage pathway; L-methionine from S-methyl-5-thio-alpha-D-ribose 1-phosphate: step 2/6. Catalyzes the dehydration of methylthioribulose-1-phosphate (MTRu-1-P) into 2,3-diketo-5-methylthiopentyl-1-phosphate (DK-MTP-1-P). This Vanderwaltozyma polyspora (strain ATCC 22028 / DSM 70294 / BCRC 21397 / CBS 2163 / NBRC 10782 / NRRL Y-8283 / UCD 57-17) (Kluyveromyces polysporus) protein is Methylthioribulose-1-phosphate dehydratase.